A 643-amino-acid polypeptide reads, in one-letter code: Pesticidal crystal protein Cry11Aa (643 aa).

Belongs to the delta endotoxin family.

Functionally, promotes colloidosmotic lysis by binding to the midgut epithelial cells of mosquitos. The sequence is that of Pesticidal crystal protein Cry11Aa (cry11Aa) from Bacillus thuringiensis subsp. israelensis.